The primary structure comprises 197 residues: Holliday junction branch migration complex subunit RuvA (197 aa).

Residues 1–63 form a domain I region; that stretch reads MIEFIRGYVD…EDVLALYGFH (63 aa). Positions 64–142 are domain II; that stretch reads TRQERMLFAK…AIVPDAFPNL (79 aa). Positions 143 to 149 are flexible linker; that stretch reads FTEPLEE. Positions 149-197 are domain III; it reads ETNALSEAIEALKALGYADKEIQKVVPMLRQERLSTEGYIKLALQKLLK.

This sequence belongs to the RuvA family. Homotetramer. Forms an RuvA(8)-RuvB(12)-Holliday junction (HJ) complex. HJ DNA is sandwiched between 2 RuvA tetramers; dsDNA enters through RuvA and exits via RuvB. An RuvB hexamer assembles on each DNA strand where it exits the tetramer. Each RuvB hexamer is contacted by two RuvA subunits (via domain III) on 2 adjacent RuvB subunits; this complex drives branch migration. In the full resolvosome a probable DNA-RuvA(4)-RuvB(12)-RuvC(2) complex forms which resolves the HJ.

The protein resides in the cytoplasm. The RuvA-RuvB-RuvC complex processes Holliday junction (HJ) DNA during genetic recombination and DNA repair, while the RuvA-RuvB complex plays an important role in the rescue of blocked DNA replication forks via replication fork reversal (RFR). RuvA specifically binds to HJ cruciform DNA, conferring on it an open structure. The RuvB hexamer acts as an ATP-dependent pump, pulling dsDNA into and through the RuvAB complex. HJ branch migration allows RuvC to scan DNA until it finds its consensus sequence, where it cleaves and resolves the cruciform DNA. The chain is Holliday junction branch migration complex subunit RuvA from Anoxybacillus flavithermus (strain DSM 21510 / WK1).